We begin with the raw amino-acid sequence, 258 residues long: Allene oxide cyclase 3, chloroplastic (258 aa).

The N-terminal 56 residues, 1–56, are a transit peptide targeting the chloroplast; it reads MASSSAAMSLESISMTTLNNLSRNHQSHRSSLLGFSRSFQNLGISSNGPDFSSRSR.

It belongs to the allene oxide cyclase family. As to expression, highly expressed in fully developed leaves.

The protein localises to the plastid. Its subcellular location is the chloroplast. The catalysed reaction is (9Z,13S,15Z)-12,13-epoxyoctadeca-9,11,15-trienoate = (9S,13S,15Z)-12-oxophyto-10,15-dienoate. Involved in the production of 12-oxo-phytodienoic acid (OPDA), a precursor of jasmonic acid. In Arabidopsis thaliana (Mouse-ear cress), this protein is Allene oxide cyclase 3, chloroplastic (AOC3).